A 341-amino-acid chain; its full sequence is L-threonine 3-dehydrogenase (341 aa).

Cysteine 38 is a Zn(2+) binding site. Active-site charge relay system residues include threonine 40 and histidine 43. Histidine 63, glutamate 64, cysteine 93, cysteine 96, cysteine 99, and cysteine 107 together coordinate Zn(2+). NAD(+) is bound by residues isoleucine 175, aspartate 195, arginine 200, 262-264 (LGI), and 286-287 (IY).

This sequence belongs to the zinc-containing alcohol dehydrogenase family. As to quaternary structure, homotetramer. It depends on Zn(2+) as a cofactor.

The protein resides in the cytoplasm. It carries out the reaction L-threonine + NAD(+) = (2S)-2-amino-3-oxobutanoate + NADH + H(+). It functions in the pathway amino-acid degradation; L-threonine degradation via oxydo-reductase pathway; glycine from L-threonine: step 1/2. Catalyzes the NAD(+)-dependent oxidation of L-threonine to 2-amino-3-ketobutyrate. The polypeptide is L-threonine 3-dehydrogenase (Shewanella loihica (strain ATCC BAA-1088 / PV-4)).